The chain runs to 197 residues: MHQNPRLILASSSRYRRAMLERLRLPFESISPDVDETPQAGEAPAALALRLSVAKAMAVARLHPGCIVIGSDQVATVDGQPIGKPGDFARAKSQLRQLSGRIVEFHSALAVTDGQRTEQADVITYCEFRPLTDAAIDAYLRAEEPYDTAGSAKAEGLGITLMESMRSDDPTAIIGLPLIALTGMLRRFGLDPLRSPS.

D72 acts as the Proton acceptor in catalysis.

Belongs to the Maf family. YceF subfamily. The cofactor is a divalent metal cation.

Its subcellular location is the cytoplasm. The catalysed reaction is N(7)-methyl-GTP + H2O = N(7)-methyl-GMP + diphosphate + H(+). Functionally, nucleoside triphosphate pyrophosphatase that hydrolyzes 7-methyl-GTP (m(7)GTP). May have a dual role in cell division arrest and in preventing the incorporation of modified nucleotides into cellular nucleic acids. This chain is 7-methyl-GTP pyrophosphatase, found in Bordetella avium (strain 197N).